We begin with the raw amino-acid sequence, 29 residues long: Cyclotide mang-A (29 aa).

Positions 1–29 (GFPTCGETCTLGTCNTPGCTCSWPICTRD) form a cross-link, cyclopeptide (Gly-Asp). Cystine bridges form between C5–C19, C9–C21, and C14–C26.

The protein belongs to the cyclotide family. Moebius subfamily. In terms of processing, this is a cyclic peptide.

Its function is as follows. Probably participates in a plant defense mechanism. The chain is Cyclotide mang-A from Melicytus angustifolius (Hymenanthera angustifolia).